The sequence spans 746 residues: Taurocyamine kinase (746 aa).

Approximate repeat units lie at residues 31–393 and 394–705; these read MQVE…PEGV and MPVE…YGEH. The region spanning 35–116 is the Phosphagen kinase N-terminal 1 domain; that stretch reads SLQNLQAKIR…FDAVIADYHK (82 aa). One can recognise a Phosphagen kinase C-terminal 1 domain in the interval 146 to 382; that stretch reads LVVSTRVRLG…RALLELEVML (237 aa). ATP is bound by residues 149–153, histidine 212, and arginine 256; that span reads STRVR. The active site involves cysteine 298. ATP-binding positions include 307–311 and 335–340; these read RASVH and RGTHGE. In terms of domain architecture, Phosphagen kinase N-terminal 2 spans 398 to 479; the sequence is PLTYLAKLLE…LDPLICDYHG (82 aa). In terms of domain architecture, Phosphagen kinase C-terminal 2 spans 509 to 746; sequence FIVSTRVRVG…AKMIEIEKGL (238 aa). ATP-binding positions include 512–516, histidine 575, and arginine 619; that span reads STRVR. The active site involves cysteine 661. ATP is bound by residues 670 to 674 and 699 to 704; these read RASVL and RGLYGE.

Belongs to the ATP:guanido phosphotransferase family. The cofactor is Mg(2+).

It catalyses the reaction taurocyamine + ATP = N-phosphotaurocyamine + ADP + H(+). Its function is as follows. This family of enzymes reversibly catalyzes the transfer of phosphate between ATP and various phosphogens (e.g. creatine phosphate). This chain is Taurocyamine kinase, found in Schistosoma mansoni (Blood fluke).